The following is an 874-amino-acid chain: Alanine--tRNA ligase (874 aa).

Zn(2+) is bound by residues His563, His567, Cys664, and His668.

The protein belongs to the class-II aminoacyl-tRNA synthetase family. It depends on Zn(2+) as a cofactor.

The protein localises to the cytoplasm. The catalysed reaction is tRNA(Ala) + L-alanine + ATP = L-alanyl-tRNA(Ala) + AMP + diphosphate. Functionally, catalyzes the attachment of alanine to tRNA(Ala) in a two-step reaction: alanine is first activated by ATP to form Ala-AMP and then transferred to the acceptor end of tRNA(Ala). Also edits incorrectly charged Ser-tRNA(Ala) and Gly-tRNA(Ala) via its editing domain. This chain is Alanine--tRNA ligase, found in Methylobacillus flagellatus (strain ATCC 51484 / DSM 6875 / VKM B-1610 / KT).